The sequence spans 135 residues: Protein PsiE homolog (135 aa).

Helical transmembrane passes span 20 to 40 (VGLI…TIHL), 54 to 74 (YMLI…ALIV), 82 to 102 (HFPL…LIIV), and 107 to 127 (PIDT…LYLA).

Belongs to the PsiE family.

The protein resides in the cell inner membrane. The sequence is that of Protein PsiE homolog from Yersinia pestis (strain Pestoides F).